A 374-amino-acid polypeptide reads, in one-letter code: Golgi-associated kinase 1B (374 aa).

The Cytoplasmic segment spans residues 1-38 (MSPDRTGRGSSSSSSSLKRLVCKSFVRAWGRRRPNLRR). A helical; Signal-anchor for type II membrane protein membrane pass occupies residues 39–61 (AVLLICTASAIYGIVIASQVLRG). The Extracellular segment spans residues 62-374 (STHPGKALRK…LLQVYTRLDR (313 aa)). Residues 136–146 (VRPKKRRKYGA) are compositionally biased toward basic residues. Positions 136–177 (VRPKKRRKYGARRPGVVQDTESKKDTLWSKVPNSQHKSQAQS) are disordered. The span at 166 to 177 (VPNSQHKSQAQS) shows a compositional bias: polar residues. Asn-281 and Asn-314 each carry an N-linked (GlcNAc...) asparagine glycan.

This sequence belongs to the GASK family.

The protein localises to the golgi apparatus membrane. The polypeptide is Golgi-associated kinase 1B (Xenopus laevis (African clawed frog)).